The following is a 272-amino-acid chain: Formamidopyrimidine-DNA glycosylase (272 aa).

Residue proline 2 is the Schiff-base intermediate with DNA of the active site. Catalysis depends on glutamate 3, which acts as the Proton donor. The active-site Proton donor; for beta-elimination activity is the lysine 58. Residues histidine 92, arginine 111, and arginine 153 each contribute to the DNA site. The FPG-type zinc-finger motif lies at 238 to 272; the sequence is AVYGRQGQSCPRCGGLVERCRLGQRSTFFCPACQR. Catalysis depends on arginine 262, which acts as the Proton donor; for delta-elimination activity.

Belongs to the FPG family. As to quaternary structure, monomer. It depends on Zn(2+) as a cofactor.

It catalyses the reaction Hydrolysis of DNA containing ring-opened 7-methylguanine residues, releasing 2,6-diamino-4-hydroxy-5-(N-methyl)formamidopyrimidine.. The catalysed reaction is 2'-deoxyribonucleotide-(2'-deoxyribose 5'-phosphate)-2'-deoxyribonucleotide-DNA = a 3'-end 2'-deoxyribonucleotide-(2,3-dehydro-2,3-deoxyribose 5'-phosphate)-DNA + a 5'-end 5'-phospho-2'-deoxyribonucleoside-DNA + H(+). Functionally, involved in base excision repair of DNA damaged by oxidation or by mutagenic agents. Acts as a DNA glycosylase that recognizes and removes damaged bases. Has a preference for oxidized purines, such as 7,8-dihydro-8-oxoguanine (8-oxoG). Has AP (apurinic/apyrimidinic) lyase activity and introduces nicks in the DNA strand. Cleaves the DNA backbone by beta-delta elimination to generate a single-strand break at the site of the removed base with both 3'- and 5'-phosphates. This is Formamidopyrimidine-DNA glycosylase from Laribacter hongkongensis (strain HLHK9).